The chain runs to 358 residues: Methylthioribose-1-phosphate isomerase (358 aa).

Substrate contacts are provided by residues 54 to 56 (RGA), R96, and Q205. D246 serves as the catalytic Proton donor. A substrate-binding site is contributed by 256-257 (NK).

It belongs to the eIF-2B alpha/beta/delta subunits family. MtnA subfamily.

The enzyme catalyses 5-(methylsulfanyl)-alpha-D-ribose 1-phosphate = 5-(methylsulfanyl)-D-ribulose 1-phosphate. Its pathway is amino-acid biosynthesis; L-methionine biosynthesis via salvage pathway; L-methionine from S-methyl-5-thio-alpha-D-ribose 1-phosphate: step 1/6. In terms of biological role, catalyzes the interconversion of methylthioribose-1-phosphate (MTR-1-P) into methylthioribulose-1-phosphate (MTRu-1-P). In Azotobacter vinelandii (strain DJ / ATCC BAA-1303), this protein is Methylthioribose-1-phosphate isomerase.